The following is an 814-amino-acid chain: Cadherin-15 (814 aa).

Positions Met1–Gly21 are cleaved as a signal peptide. Positions Val22–Arg60 are excised as a propeptide. 5 consecutive Cadherin domains span residues Leu61 to Phe152, Leu153 to Phe260, Thr261 to Phe375, Gln376 to Pro481, and Val482 to Pro590. Residues Leu61–Ala606 are Extracellular-facing. Asn227 is a glycosylation site (N-linked (GlcNAc...) asparagine). 3 N-linked (GlcNAc...) asparagine glycosylation sites follow: Asn531, Asn538, and Asn576. The helical transmembrane segment at Leu607–Leu626 threads the bilayer. Residues Arg627–Ala814 are Cytoplasmic-facing. Disordered regions lie at residues Gly636–Asp663 and Thr676–Val703.

Expressed in the brain and cerebellum.

Its subcellular location is the cell membrane. In terms of biological role, cadherins are calcium-dependent cell adhesion proteins. They preferentially interact with themselves in a homophilic manner in connecting cells; cadherins may thus contribute to the sorting of heterogeneous cell types. M-cadherin is part of the myogenic program and may provide a trigger for terminal muscle differentiation. The protein is Cadherin-15 (CDH15) of Homo sapiens (Human).